Consider the following 1386-residue polypeptide: Putative ATP-dependent RNA helicase DHX57 (1386 aa).

Basic residues predominate over residues 1 to 11 (MSSSVRRKGKP). Disordered stretches follow at residues 1 to 106 (MSSS…MTSE) and 120 to 147 (EQDADAGSERGLSGEEEDDEPDCCNDER). Composition is skewed to gly residues over residues 12-23 (GKGGGKGSSRGG) and 35-50 (GSGGGGGGGGGGGGGN). Residues 101 to 125 (LHMTSENQEKVKALLRDLQEQDADA) adopt a coiled-coil conformation. S127 and S132 each carry phosphoserine. Residues 133-143 (GEEEDDEPDCC) are compositionally biased toward acidic residues. Residues 180–220 (TVSPFAVQKLSRYGFNTERCQAVLRMCDGDVGASLEHLLTQ) form the UBA domain. The segment at 299 to 326 (ENSLEICKFYLKGNCKFGSKCRFKHEVP) adopts a C3H1-type zinc-finger fold. Residues S475, S477, and S480 each carry the phosphoserine modification. Residues 554–721 (LNLLRKHQVV…FNSCPVITIP (168 aa)) enclose the Helicase ATP-binding domain. 567-574 (GMTGCGKT) is an ATP binding site. The DEVH box motif lies at 668 to 671 (DEVH). The Helicase C-terminal domain maps to 830 to 1010 (LIEALLEWIV…QLCLRIKILE (181 aa)).

Belongs to the DEAD box helicase family. DEAH subfamily.

It carries out the reaction ATP + H2O = ADP + phosphate + H(+). In terms of biological role, probable ATP-binding RNA helicase. The sequence is that of Putative ATP-dependent RNA helicase DHX57 (DHX57) from Homo sapiens (Human).